The following is a 477-amino-acid chain: Ribulose bisphosphate carboxylase large chain (477 aa).

A propeptide spanning residues 1–2 is cleaved from the precursor; the sequence is MS. Pro-3 is subject to N-acetylproline. Lys-14 carries the N6,N6,N6-trimethyllysine modification. Asn-123 and Thr-173 together coordinate substrate. The Proton acceptor role is filled by Lys-175. Substrate is bound at residue Lys-177. Lys-201, Asp-203, and Glu-204 together coordinate Mg(2+). At Lys-201 the chain carries N6-carboxylysine. The active-site Proton acceptor is the His-294. Residues Arg-295, His-327, and Ser-379 each contribute to the substrate site.

It belongs to the RuBisCO large chain family. Type I subfamily. In terms of assembly, heterohexadecamer of 8 large chains and 8 small chains; disulfide-linked. The disulfide link is formed within the large subunit homodimers. Mg(2+) is required as a cofactor. In terms of processing, the disulfide bond which can form in the large chain dimeric partners within the hexadecamer appears to be associated with oxidative stress and protein turnover.

It is found in the plastid. The protein resides in the chloroplast. It catalyses the reaction 2 (2R)-3-phosphoglycerate + 2 H(+) = D-ribulose 1,5-bisphosphate + CO2 + H2O. The enzyme catalyses D-ribulose 1,5-bisphosphate + O2 = 2-phosphoglycolate + (2R)-3-phosphoglycerate + 2 H(+). RuBisCO catalyzes two reactions: the carboxylation of D-ribulose 1,5-bisphosphate, the primary event in carbon dioxide fixation, as well as the oxidative fragmentation of the pentose substrate in the photorespiration process. Both reactions occur simultaneously and in competition at the same active site. The polypeptide is Ribulose bisphosphate carboxylase large chain (Agrostis stolonifera (Creeping bentgrass)).